Consider the following 396-residue polypeptide: MALKLNPFLSQTQKLPSFALPPMASTRSPKFYMASTLKSGSKEVENLKKPFMPPREVHVQVTHSMPPQKIEIFKSLDNWAEENILVHLKPVEKCWQPQDFLPDPASDGFDEQVRELRERAKEIPDDYFVVLVGDMITEEALPTYQTMLNTLDGVRDETGASPTSWAIWTRAWTAEENRHGDLLNKYLYLSGRVDMRQIEKTIQYLIGSGMDPRTENSPYLGFIYTSFQERATFISHGNTARQAKEHGDIKLAQICGTIAADEKRHETAYTKIVEKLFEIDPDGTVLAFADMMRKKISMPAHLMYDGRDDNLFDHFSAVAQRLGVYTAKDYADILEFLVGRWKVDKLTGLSAEGQKAQDYVCRLPPRIRRLEERAQGRAKEAPTMPFSWIFDRQVKL.

The transit peptide at 1–33 (MALKLNPFLSQTQKLPSFALPPMASTRSPKFYM) directs the protein to the chloroplast. Residues Glu138, Glu176, His179, Glu229, Glu262, and His265 each contribute to the Fe cation site.

This sequence belongs to the fatty acid desaturase type 2 family. Homodimer. The cofactor is Fe(2+). Higher levels in developing seeds than in leaf and root tissues.

The protein resides in the plastid. It localises to the chloroplast. The catalysed reaction is octadecanoyl-[ACP] + 2 reduced [2Fe-2S]-[ferredoxin] + O2 + 2 H(+) = (9Z)-octadecenoyl-[ACP] + 2 oxidized [2Fe-2S]-[ferredoxin] + 2 H2O. Its pathway is lipid metabolism; fatty acid metabolism. In terms of biological role, converts stearoyl-ACP to oleoyl-ACP by introduction of a cis double bond between carbons 9 and 10 of the acyl chain. The sequence is that of Stearoyl-[acyl-carrier-protein] 9-desaturase, chloroplastic from Ricinus communis (Castor bean).